Here is a 321-residue protein sequence, read N- to C-terminus: Putative pyridoxal kinase (321 aa).

2 residues coordinate substrate: S23 and Y144. ATP is bound by residues 203–204 (TS) and 230–242 (TFPRLVGQFVGTG). Position 243 (D243) interacts with substrate.

The protein belongs to the pyridoxine kinase family. Requires Zn(2+) as cofactor. Mg(2+) serves as cofactor.

The catalysed reaction is pyridoxal + ATP = pyridoxal 5'-phosphate + ADP + H(+). Its function is as follows. Required for synthesis of pyridoxal-5-phosphate from vitamin B6. In Caenorhabditis elegans, this protein is Putative pyridoxal kinase.